The following is a 113-amino-acid chain: UPF0342 protein MGAS10750_Spy0713 (113 aa).

This sequence belongs to the UPF0342 family.

In Streptococcus pyogenes serotype M4 (strain MGAS10750), this protein is UPF0342 protein MGAS10750_Spy0713.